We begin with the raw amino-acid sequence, 259 residues long: Adenosylcobinamide-GDP ribazoletransferase (259 aa).

6 helical membrane passes run 9-29, 43-63, 64-84, 118-138, 143-163, and 190-210; these read NLFF…WIEV, LVGL…LYWV, SPSI…GGFH, ALAL…LALF, VSLA…SFIF, and ILLA…ALVL.

The protein belongs to the CobS family. Mg(2+) serves as cofactor.

It localises to the cell inner membrane. The catalysed reaction is alpha-ribazole + adenosylcob(III)inamide-GDP = adenosylcob(III)alamin + GMP + H(+). It carries out the reaction alpha-ribazole 5'-phosphate + adenosylcob(III)inamide-GDP = adenosylcob(III)alamin 5'-phosphate + GMP + H(+). It participates in cofactor biosynthesis; adenosylcobalamin biosynthesis; adenosylcobalamin from cob(II)yrinate a,c-diamide: step 7/7. Its function is as follows. Joins adenosylcobinamide-GDP and alpha-ribazole to generate adenosylcobalamin (Ado-cobalamin). Also synthesizes adenosylcobalamin 5'-phosphate from adenosylcobinamide-GDP and alpha-ribazole 5'-phosphate. The protein is Adenosylcobinamide-GDP ribazoletransferase of Shewanella pealeana (strain ATCC 700345 / ANG-SQ1).